We begin with the raw amino-acid sequence, 301 residues long: G-protein coupled receptor homolog U51 (301 aa).

Topologically, residues 1-15 (MEKETKSLAWPATAE) are extracellular. A helical transmembrane segment spans residues 16–36 (FYGWVFIFSSIQLCTVVFLTV). Over 37 to 48 (RFNGFKVGREYA) the chain is Cytoplasmic. The chain crosses the membrane as a helical span at residues 49–69 (VFTFAGMSFNCFLLPIKMGLL). Topologically, residues 70–82 (SGHWTLPRDFCAI) are extracellular. Residues 83-103 (LLYIDDFSAYFSSWSLVFMAI) form a helical membrane-spanning segment. Residues 104 to 122 (ERINYFCYSTPLLNENSKA) are Cytoplasmic-facing. The helical transmembrane segment at 123 to 143 (LAKVCFPIVWVVSGVQALQML) threads the bilayer. At 144–168 (NNYKATALQNETGQCFLAFLRSGHD) the chain is on the extracellular side. The N-linked (GlcNAc...) asparagine; by host glycan is linked to Asn153. The helical transmembrane segment at 169–189 (MWLMLVYSVVIPVMLVFFYLY) threads the bilayer. The Cytoplasmic segment spans residues 190–199 (SKNFMLLKDE). A helical membrane pass occupies residues 200–220 (LSSVTTYLCIYLLLGTIAHLP). Residues 221–238 (KAALSEIESDKIFYGLRD) lie on the Extracellular side of the membrane. The helical transmembrane segment at 239 to 259 (IFMALPVLKVYYISAMAYCMA) threads the bilayer. The Cytoplasmic segment spans residues 260 to 301 (CDDHTVPVRLCSIWLVNLCKKCFSCTRREKGSDLEVGIKMLK).

This sequence belongs to the G-protein coupled receptor 1 family.

It is found in the host cell membrane. The polypeptide is G-protein coupled receptor homolog U51 (U51) (Homo sapiens (Human)).